A 193-amino-acid polypeptide reads, in one-letter code: Leucyl/phenylalanyl-tRNA--protein transferase (193 aa).

This sequence belongs to the L/F-transferase family.

Its subcellular location is the cytoplasm. The catalysed reaction is N-terminal L-lysyl-[protein] + L-leucyl-tRNA(Leu) = N-terminal L-leucyl-L-lysyl-[protein] + tRNA(Leu) + H(+). The enzyme catalyses N-terminal L-arginyl-[protein] + L-leucyl-tRNA(Leu) = N-terminal L-leucyl-L-arginyl-[protein] + tRNA(Leu) + H(+). It carries out the reaction L-phenylalanyl-tRNA(Phe) + an N-terminal L-alpha-aminoacyl-[protein] = an N-terminal L-phenylalanyl-L-alpha-aminoacyl-[protein] + tRNA(Phe). In terms of biological role, functions in the N-end rule pathway of protein degradation where it conjugates Leu, Phe and, less efficiently, Met from aminoacyl-tRNAs to the N-termini of proteins containing an N-terminal arginine or lysine. The sequence is that of Leucyl/phenylalanyl-tRNA--protein transferase from Gloeobacter violaceus (strain ATCC 29082 / PCC 7421).